Here is a 254-residue protein sequence, read N- to C-terminus: Triosephosphate isomerase (254 aa).

12-14 (NWK) contacts substrate. H99 serves as the catalytic Electrophile. E169 (proton acceptor) is an active-site residue. Substrate contacts are provided by residues G175, S214, and 235 to 236 (GG).

This sequence belongs to the triosephosphate isomerase family. In terms of assembly, homodimer.

Its subcellular location is the cytoplasm. It carries out the reaction D-glyceraldehyde 3-phosphate = dihydroxyacetone phosphate. Its pathway is carbohydrate biosynthesis; gluconeogenesis. It participates in carbohydrate degradation; glycolysis; D-glyceraldehyde 3-phosphate from glycerone phosphate: step 1/1. In terms of biological role, involved in the gluconeogenesis. Catalyzes stereospecifically the conversion of dihydroxyacetone phosphate (DHAP) to D-glyceraldehyde-3-phosphate (G3P). The polypeptide is Triosephosphate isomerase (Bartonella quintana (strain Toulouse) (Rochalimaea quintana)).